Reading from the N-terminus, the 209-residue chain is Glycolipid transfer protein B (209 aa).

2 consecutive repeat copies span residues 45-55 (IKADITGNITK) and 56-66 (IRSVYESNPTQ). The tract at residues 45-66 (IKADITGNITKIRSVYESNPTQ) is 2 X 12 AA approximate tandem repeats. 48-55 (DITGNITK) is a beta-D-galactosyl-(1-&gt;4)-beta-D-glucosyl-(1&lt;-&gt;1)-N-[(9Z)-octadecenoyl]-sphing-4-enine binding site. Beta-D-galactosyl-(1-&gt;4)-beta-D-glucosyl-(1&lt;-&gt;1)-N-[(9Z)-octadecenoyl]-sphing-4-enine-binding residues include histidine 140 and tyrosine 207.

It belongs to the GLTP family.

Its subcellular location is the cytoplasm. Its function is as follows. Accelerates the intermembrane transfer of various glycolipids. Catalyzes the transfer of various glycosphingolipids between membranes but does not catalyze the transfer of phospholipids. May be involved in the intracellular translocation of glucosylceramides. The sequence is that of Glycolipid transfer protein B (gltp-b) from Xenopus laevis (African clawed frog).